Consider the following 439-residue polypeptide: Probable non-inhibitory serpin-Z9 (439 aa).

Residues 12–44 (RRPPFPAGDANHRRLSSAPAPKPEAPAEAMPPP) are disordered. Residues 31–44 (APKPEAPAEAMPPP) show a composition bias toward pro residues. An RCL region spans residues 389-413 (GIEETSVSMGLGKPLPAQHFKADHP).

Belongs to the serpin family.

The polypeptide is Probable non-inhibitory serpin-Z9 (Oryza sativa subsp. japonica (Rice)).